The chain runs to 501 residues: tRNA (guanine(37)-N(1))-methyltransferase (501 aa).

Residues His282, 320-321 (DL), 348-349 (DG), and Asn380 each bind S-adenosyl-L-methionine. The tract at residues 474–501 (LQNDQEPPLKRQKTGDPFSGEPQIASDS) is disordered.

The protein belongs to the class I-like SAM-binding methyltransferase superfamily. TRM5/TYW2 family. Monomer.

The protein localises to the mitochondrion matrix. The protein resides in the nucleus. It localises to the cytoplasm. It carries out the reaction guanosine(37) in tRNA + S-adenosyl-L-methionine = N(1)-methylguanosine(37) in tRNA + S-adenosyl-L-homocysteine + H(+). Its function is as follows. Involved in mitochondrial tRNA methylation. Specifically methylates the N1 position of guanosine-37 in various tRNAs. Methylation is not dependent on the nature of the nucleoside 5' of the target nucleoside. This is the first step in the biosynthesis of wybutosine (yW), a modified base adjacent to the anticodon of tRNAs and required for accurate decoding. The chain is tRNA (guanine(37)-N(1))-methyltransferase (Trmt5) from Mus musculus (Mouse).